Reading from the N-terminus, the 403-residue chain is Probable protein phosphatase 2C 8 (403 aa).

The tract at residues 42–80 (LGRTASAVAEDDAAKRVRPASDSSSDSSESAKVAPEPTA) is disordered. Residues 62–71 (SDSSSDSSES) are compositionally biased toward low complexity. Residues 90–388 (SHGAVSVIGR…DNISVVVVEL (299 aa)) form the PPM-type phosphatase domain. Positions 144, 145, 325, and 379 each coordinate Mn(2+).

This sequence belongs to the PP2C family. The cofactor is Mg(2+). It depends on Mn(2+) as a cofactor.

It catalyses the reaction O-phospho-L-seryl-[protein] + H2O = L-seryl-[protein] + phosphate. It carries out the reaction O-phospho-L-threonyl-[protein] + H2O = L-threonyl-[protein] + phosphate. The polypeptide is Probable protein phosphatase 2C 8 (Oryza sativa subsp. japonica (Rice)).